A 101-amino-acid chain; its full sequence is Small ribosomal subunit protein bS6 (101 aa).

This sequence belongs to the bacterial ribosomal protein bS6 family. In terms of assembly, part of the 30S ribosomal subunit. Forms a tight heterodimer with protein bS18.

Its function is as follows. Located on the outer edge of the platform on the body of the 30S subunit. In Thermus thermophilus (strain ATCC BAA-163 / DSM 7039 / HB27), this protein is Small ribosomal subunit protein bS6 (rpsF).